A 476-amino-acid chain; its full sequence is Glutamate--tRNA ligase (476 aa).

Positions 9-19 match the 'HIGH' region motif; that stretch reads PSPTGKLHIGT. The span at 109–129 shows a compositional bias: basic and acidic residues; sequence REEQKSRNKPPRYDNRHRSLS. The interval 109–133 is disordered; sequence REEQKSRNKPPRYDNRHRSLSTEEE. The 'KMSKS' region motif lies at 248–252; the sequence is KLSKR. K251 is a binding site for ATP.

It belongs to the class-I aminoacyl-tRNA synthetase family. Glutamate--tRNA ligase type 1 subfamily. Monomer.

The protein resides in the cytoplasm. The enzyme catalyses tRNA(Glu) + L-glutamate + ATP = L-glutamyl-tRNA(Glu) + AMP + diphosphate. In terms of biological role, catalyzes the attachment of glutamate to tRNA(Glu) in a two-step reaction: glutamate is first activated by ATP to form Glu-AMP and then transferred to the acceptor end of tRNA(Glu). The protein is Glutamate--tRNA ligase of Prochlorococcus marinus (strain MIT 9211).